We begin with the raw amino-acid sequence, 86 residues long: Allergen Api g 5 (86 aa).

Asn-62 is a glycosylation site (N-linked (GlcNAc...) asparagine).

It belongs to the oxygen-dependent FAD-linked oxidoreductase family. Requires FAD as cofactor. In terms of processing, carries MUXF and MMXF, two complex N-linked glycans with alpha-1,3-fucose and beta-1,2-xylose residues in their structures. MMXF is added to Asn-62.

The polypeptide is Allergen Api g 5 (Apium graveolens (Celery)).